Consider the following 461-residue polypeptide: NADH-ubiquinone oxidoreductase chain 4 (461 aa).

The next 13 membrane-spanning stretches (helical) occupy residues 20 to 42 (PAWLWPTMTTNSLLVATISLTWL), 61 to 81 (PLSTPLLILTCWLLPLMILAS), 93 to 113 (QRSFISLLISLQTFLIMAFGA), 114 to 134 (TEIILFYIMFEATLIPTLIII), 147 to 167 (GTYFLFYTVMGSLPLLVALLM), 197 to 217 (WTACLLAFLVKMPLYGVHLWL), 225 to 245 (PIAGSMVLAAVLLKLGGYGMM), 258 to 278 (LAYPFIILALWGIIMTGSICL), 285 to 304 (SLIAYSSVGHMGLVAAGILT), 309 to 331 (GFTGATVLMIAHGLTSSALFCLA), 351 to 371 (VILPLMTFWWLMMNLANLALP), 393 to 413 (TLTMTGLGMLITAIYSLHMFL), and 436 to 456 (LLMTMHALPMLLLILKPELIW).

It belongs to the complex I subunit 4 family.

Its subcellular location is the mitochondrion membrane. It carries out the reaction a ubiquinone + NADH + 5 H(+)(in) = a ubiquinol + NAD(+) + 4 H(+)(out). Its function is as follows. Core subunit of the mitochondrial membrane respiratory chain NADH dehydrogenase (Complex I) that is believed to belong to the minimal assembly required for catalysis. Complex I functions in the transfer of electrons from NADH to the respiratory chain. The immediate electron acceptor for the enzyme is believed to be ubiquinone. The polypeptide is NADH-ubiquinone oxidoreductase chain 4 (MT-ND4) (Latimeria chalumnae (Coelacanth)).